Consider the following 425-residue polypeptide: Rho GTPase-activating protein 8 (425 aa).

The region spanning 13-168 (PFYDVARHGI…EVVRYDEKLQ (156 aa)) is the CRAL-TRIO domain. Residues 169–192 (NLHKGQPPPPTKTPPPRPPLPTQQ) are disordered. Over residues 174 to 189 (QPPPPTKTPPPRPPLP) the composition is skewed to pro residues. A Rho-GAP domain is found at 195 to 381 (VSLQYLRDKN…LLIEYYDKVF (187 aa)).

Highly expressed in skeletal muscle, lung and testis, and at lower levels in kidney, stomach and colon. Not detected in heart, liver, spleen, breast, brain, neonatal head or pancreas.

GTPase activator for the Rho-type GTPases by converting them to an inactive GDP-bound state. The polypeptide is Rho GTPase-activating protein 8 (Arhgap8) (Mus musculus (Mouse)).